We begin with the raw amino-acid sequence, 225 residues long: NAD(P)H-quinone oxidoreductase subunit K, chloroplastic (225 aa).

4 residues coordinate [4Fe-4S] cluster: C43, C44, C108, and C139.

This sequence belongs to the complex I 20 kDa subunit family. NDH is composed of at least 16 different subunits, 5 of which are encoded in the nucleus. Requires [4Fe-4S] cluster as cofactor.

It localises to the plastid. The protein localises to the chloroplast thylakoid membrane. The enzyme catalyses a plastoquinone + NADH + (n+1) H(+)(in) = a plastoquinol + NAD(+) + n H(+)(out). The catalysed reaction is a plastoquinone + NADPH + (n+1) H(+)(in) = a plastoquinol + NADP(+) + n H(+)(out). Functionally, NDH shuttles electrons from NAD(P)H:plastoquinone, via FMN and iron-sulfur (Fe-S) centers, to quinones in the photosynthetic chain and possibly in a chloroplast respiratory chain. The immediate electron acceptor for the enzyme in this species is believed to be plastoquinone. Couples the redox reaction to proton translocation, and thus conserves the redox energy in a proton gradient. The protein is NAD(P)H-quinone oxidoreductase subunit K, chloroplastic of Amborella trichopoda.